Here is a 460-residue protein sequence, read N- to C-terminus: Bifunctional protein GlmU (460 aa).

A pyrophosphorylase region spans residues 1–229; sequence MTNYAIILAA…FNESLGVNDR (229 aa). Residues 8-11, Lys22, Gln72, and 77-78 each bind UDP-N-acetyl-alpha-D-glucosamine; these read LAAG and GT. Asp102 is a Mg(2+) binding site. Positions 139, 154, 169, and 227 each coordinate UDP-N-acetyl-alpha-D-glucosamine. Residue Asn227 coordinates Mg(2+). The tract at residues 230-250 is linker; it reads VALATAETVMRQRITQKHMVN. The segment at 251–460 is N-acetyltransferase; sequence GVTFQNPETV…RLAHHPSRSK (210 aa). Arg332 and Lys350 together coordinate UDP-N-acetyl-alpha-D-glucosamine. The Proton acceptor role is filled by His362. UDP-N-acetyl-alpha-D-glucosamine contacts are provided by Tyr365 and Asn376. Residues Ala379, 385 to 386, Ser404, Ala422, and Arg439 contribute to the acetyl-CoA site; that span reads NY.

In the N-terminal section; belongs to the N-acetylglucosamine-1-phosphate uridyltransferase family. It in the C-terminal section; belongs to the transferase hexapeptide repeat family. In terms of assembly, homotrimer. The cofactor is Mg(2+).

The protein resides in the cytoplasm. It carries out the reaction alpha-D-glucosamine 1-phosphate + acetyl-CoA = N-acetyl-alpha-D-glucosamine 1-phosphate + CoA + H(+). It catalyses the reaction N-acetyl-alpha-D-glucosamine 1-phosphate + UTP + H(+) = UDP-N-acetyl-alpha-D-glucosamine + diphosphate. The protein operates within nucleotide-sugar biosynthesis; UDP-N-acetyl-alpha-D-glucosamine biosynthesis; N-acetyl-alpha-D-glucosamine 1-phosphate from alpha-D-glucosamine 6-phosphate (route II): step 2/2. It functions in the pathway nucleotide-sugar biosynthesis; UDP-N-acetyl-alpha-D-glucosamine biosynthesis; UDP-N-acetyl-alpha-D-glucosamine from N-acetyl-alpha-D-glucosamine 1-phosphate: step 1/1. It participates in bacterial outer membrane biogenesis; LPS lipid A biosynthesis. Catalyzes the last two sequential reactions in the de novo biosynthetic pathway for UDP-N-acetylglucosamine (UDP-GlcNAc). The C-terminal domain catalyzes the transfer of acetyl group from acetyl coenzyme A to glucosamine-1-phosphate (GlcN-1-P) to produce N-acetylglucosamine-1-phosphate (GlcNAc-1-P), which is converted into UDP-GlcNAc by the transfer of uridine 5-monophosphate (from uridine 5-triphosphate), a reaction catalyzed by the N-terminal domain. The polypeptide is Bifunctional protein GlmU (Streptococcus pyogenes serotype M12 (strain MGAS9429)).